Reading from the N-terminus, the 85-residue chain is UPF0291 protein SPH_1589 (85 aa).

A disordered region spans residues 62 to 85 (TPEKLRQVQREKGLHGRSLDDPNS).

Belongs to the UPF0291 family.

It localises to the cytoplasm. The polypeptide is UPF0291 protein SPH_1589 (Streptococcus pneumoniae (strain Hungary19A-6)).